Reading from the N-terminus, the 86-residue chain is MSDDEGISIYDEVEIEDMTFDEAMGVYQFPCPCGDKFQITLEDLLDEQDIAVCPSCSLMIRVIFDLDDLPKPPTSGASGGQVPITA.

Residues 9 to 65 (IYDEVEIEDMTFDEAMGVYQFPCPCGDKFQITLEDLLDEQDIAVCPSCSLMIRVIFD) form the DPH-type MB domain. Fe cation contacts are provided by Cys-31, Cys-33, Cys-53, and Cys-56.

It belongs to the DPH3 family. In terms of assembly, component of the 2-(3-amino-3-carboxypropyl)histidine synthase complex composed of DPH1, DPH2, DPH3 and a NADH-dependent reductase, predominantly CBR1. The cofactor is Fe(2+).

Its subcellular location is the cytoplasm. The protein resides in the nucleus. It carries out the reaction [3Fe-4S](1+)-[protein] + Fe(2+)-[Dph3] = [3Fe-4S](0)-[protein] + Fe(3+)-[Dph3]. The catalysed reaction is 2 [3Fe-4S](0)-[protein] + 2 Fe(2+)-[Dph3] + NADH = 2 [4Fe-4S](1+)-[protein] + 2 [Dph3] + NAD(+) + H(+). The protein operates within protein modification; peptidyl-diphthamide biosynthesis. Required for the first step of diphthamide biosynthesis, a post-translational modification of histidine which occurs in elongation factor 2. DPH1 and DPH2 transfer a 3-amino-3-carboxypropyl (ACP) group from S-adenosyl-L-methionine (SAM) to a histidine residue, the reaction is assisted by a reduction system comprising KTI11/DPH3 and a NADH-dependent reductase, predominantly CBR1. Acts as an electron donor to reduce the Fe-S cluster in DPH1-DPH2 keeping the [4Fe-4S] clusters in the active and reduced state. Restores iron to DPH1-DPH2 iron-sulfur clusters which have degraded from [4Fe-4S] to [3Fe-4S] by donating an iron atom to reform [4Fe-4S] clusters, in a manner dependent on the presence of elongation factor 2 and SAM. Associates with the elongator complex and is required for tRNA Wobble base modifications mediated by the elongator complex. The elongator complex is required for multiple tRNA modifications, including mcm5U (5-methoxycarbonylmethyl uridine), mcm5s 2U (5-methoxycarbonylmethyl-2-thiouridine), and ncm5U (5-carbamoylmethyl uridine). In Gibberella zeae (strain ATCC MYA-4620 / CBS 123657 / FGSC 9075 / NRRL 31084 / PH-1) (Wheat head blight fungus), this protein is Diphthamide biosynthesis protein 3 (DPH3).